We begin with the raw amino-acid sequence, 314 residues long: DNA-directed RNA polymerase subunit alpha (314 aa).

Residues 1 to 228 (MIEIEKPKIE…EHLNIFVGLT (228 aa)) are alpha N-terminal domain (alpha-NTD). The alpha C-terminal domain (alpha-CTD) stretch occupies residues 246–314 (EKVLEMTIEE…ELGLGLRKDD (69 aa)).

This sequence belongs to the RNA polymerase alpha chain family. Homodimer. The RNAP catalytic core consists of 2 alpha, 1 beta, 1 beta' and 1 omega subunit. When a sigma factor is associated with the core the holoenzyme is formed, which can initiate transcription.

The catalysed reaction is RNA(n) + a ribonucleoside 5'-triphosphate = RNA(n+1) + diphosphate. Functionally, DNA-dependent RNA polymerase catalyzes the transcription of DNA into RNA using the four ribonucleoside triphosphates as substrates. The sequence is that of DNA-directed RNA polymerase subunit alpha from Bacillus cytotoxicus (strain DSM 22905 / CIP 110041 / 391-98 / NVH 391-98).